Consider the following 237-residue polypeptide: tRNA (guanine-N(7)-)-methyltransferase (237 aa).

S-adenosyl-L-methionine is bound by residues E67, E92, D119, and D141. Residue D141 is part of the active site. Substrate-binding positions include K145, D177, and 214–217; that span reads TRYE.

Belongs to the class I-like SAM-binding methyltransferase superfamily. TrmB family.

It carries out the reaction guanosine(46) in tRNA + S-adenosyl-L-methionine = N(7)-methylguanosine(46) in tRNA + S-adenosyl-L-homocysteine. It functions in the pathway tRNA modification; N(7)-methylguanine-tRNA biosynthesis. Functionally, catalyzes the formation of N(7)-methylguanine at position 46 (m7G46) in tRNA. This Ruegeria pomeroyi (strain ATCC 700808 / DSM 15171 / DSS-3) (Silicibacter pomeroyi) protein is tRNA (guanine-N(7)-)-methyltransferase.